The sequence spans 380 residues: Chaperone protein DnaJ (380 aa).

The J domain occupies 5–69 (DFYEVLGVGR…QKKAAYDQYG (65 aa)). The CR-type zinc-finger motif lies at 135-213 (GCSKEIRVPT…CHGQGRVEKT (79 aa)). Positions 148, 151, 165, 168, 187, 190, 201, and 204 each coordinate Zn(2+). CXXCXGXG motif repeat units lie at residues 148 to 155 (CDSCDGSG), 165 to 172 (CGTCHGQG), 187 to 194 (CPHCHGRG), and 201 to 208 (CNSCHGQG).

The protein belongs to the DnaJ family. In terms of assembly, homodimer. Requires Zn(2+) as cofactor.

It localises to the cytoplasm. Functionally, participates actively in the response to hyperosmotic and heat shock by preventing the aggregation of stress-denatured proteins and by disaggregating proteins, also in an autonomous, DnaK-independent fashion. Unfolded proteins bind initially to DnaJ; upon interaction with the DnaJ-bound protein, DnaK hydrolyzes its bound ATP, resulting in the formation of a stable complex. GrpE releases ADP from DnaK; ATP binding to DnaK triggers the release of the substrate protein, thus completing the reaction cycle. Several rounds of ATP-dependent interactions between DnaJ, DnaK and GrpE are required for fully efficient folding. Also involved, together with DnaK and GrpE, in the DNA replication of plasmids through activation of initiation proteins. This chain is Chaperone protein DnaJ, found in Photobacterium profundum (strain SS9).